The primary structure comprises 320 residues: Cytochrome f (320 aa).

Positions 1–35 (MENRNTFSWVKEQITRSISVSIMIYVITRTSISNA) are cleaved as a signal peptide. 4 residues coordinate heme: Tyr36, Cys56, Cys59, and His60. A helical transmembrane segment spans residues 286-306 (VQGLLFFFASVILAQVFLVLK).

This sequence belongs to the cytochrome f family. In terms of assembly, the 4 large subunits of the cytochrome b6-f complex are cytochrome b6, subunit IV (17 kDa polypeptide, petD), cytochrome f and the Rieske protein, while the 4 small subunits are PetG, PetL, PetM and PetN. The complex functions as a dimer. Requires heme as cofactor.

It is found in the plastid. Its subcellular location is the chloroplast thylakoid membrane. In terms of biological role, component of the cytochrome b6-f complex, which mediates electron transfer between photosystem II (PSII) and photosystem I (PSI), cyclic electron flow around PSI, and state transitions. This is Cytochrome f from Hordeum vulgare (Barley).